Reading from the N-terminus, the 399-residue chain is Probable peptidoglycan glycosyltransferase FtsW (399 aa).

9 consecutive transmembrane segments (helical) span residues 19 to 39 (PLPV…VMIS), 61 to 81 (ILFA…PVSW), 85 to 105 (SGWL…TPLG), 114 to 134 (WIPM…CLIA), 160 to 180 (VLGV…TVVL), 198 to 218 (FMPL…TQPY), 285 to 305 (LLGA…GLVI), 314 to 334 (MAFG…QAGI), and 350 to 370 (LPLV…IAVI).

Belongs to the SEDS family. FtsW subfamily.

It localises to the cell inner membrane. The catalysed reaction is [GlcNAc-(1-&gt;4)-Mur2Ac(oyl-L-Ala-gamma-D-Glu-L-Lys-D-Ala-D-Ala)](n)-di-trans,octa-cis-undecaprenyl diphosphate + beta-D-GlcNAc-(1-&gt;4)-Mur2Ac(oyl-L-Ala-gamma-D-Glu-L-Lys-D-Ala-D-Ala)-di-trans,octa-cis-undecaprenyl diphosphate = [GlcNAc-(1-&gt;4)-Mur2Ac(oyl-L-Ala-gamma-D-Glu-L-Lys-D-Ala-D-Ala)](n+1)-di-trans,octa-cis-undecaprenyl diphosphate + di-trans,octa-cis-undecaprenyl diphosphate + H(+). It functions in the pathway cell wall biogenesis; peptidoglycan biosynthesis. Its function is as follows. Peptidoglycan polymerase that is essential for cell division. This is Probable peptidoglycan glycosyltransferase FtsW from Marinobacter nauticus (strain ATCC 700491 / DSM 11845 / VT8) (Marinobacter aquaeolei).